The chain runs to 259 residues: Cysteine protease IpaJ (259 aa).

Active-site residues include cysteine 64, histidine 206, and aspartate 218.

The protein resides in the secreted. It localises to the host cytoplasm. Its function is as follows. Virulence factor that eliminates N-myristoyl protein modifications in infected host cells. Acts as a cysteine protease that cleaves the peptide bond between N-myristoylated Gly-2 and Asn-3 of human ARF1, leading to the elimination of the myristoyl group and alteration of protein trafficking in host cell. Could also cleave an array of N-myristoylated host proteins involved in cellular growth, signal transduction, autophagasome maturation and organelle function. This is Cysteine protease IpaJ (ipaJ) from Shigella flexneri.